The sequence spans 281 residues: 2-dehydro-3-deoxyphosphooctonate aldolase 1 (281 aa).

It belongs to the KdsA family.

The protein resides in the cytoplasm. The enzyme catalyses D-arabinose 5-phosphate + phosphoenolpyruvate + H2O = 3-deoxy-alpha-D-manno-2-octulosonate-8-phosphate + phosphate. It functions in the pathway carbohydrate biosynthesis; 3-deoxy-D-manno-octulosonate biosynthesis; 3-deoxy-D-manno-octulosonate from D-ribulose 5-phosphate: step 2/3. It participates in bacterial outer membrane biogenesis; lipopolysaccharide biosynthesis. This is 2-dehydro-3-deoxyphosphooctonate aldolase 1 (kdsA1) from Pseudomonas putida (strain ATCC 47054 / DSM 6125 / CFBP 8728 / NCIMB 11950 / KT2440).